Here is a 252-residue protein sequence, read N- to C-terminus: Small ribosomal subunit protein uS3 (252 aa).

A KH type-2 domain is found at 39–111 (IRKLINNFAK…EVNLNVLEVK (73 aa)). Residues 222–252 (KPFASQSSNTPNRRPRNFKGGNNNHVNAKKN) are disordered. Residues 241 to 252 (GGNNNHVNAKKN) show a composition bias toward polar residues.

This sequence belongs to the universal ribosomal protein uS3 family. As to quaternary structure, part of the 30S ribosomal subunit. Forms a tight complex with proteins S10 and S14.

Its function is as follows. Binds the lower part of the 30S subunit head. Binds mRNA in the 70S ribosome, positioning it for translation. The chain is Small ribosomal subunit protein uS3 from Phytoplasma sp. (strain STRAWB2).